The sequence spans 247 residues: tRNA1(Val) (adenine(37)-N6)-methyltransferase (247 aa).

The protein belongs to the methyltransferase superfamily. tRNA (adenine-N(6)-)-methyltransferase family.

It localises to the cytoplasm. The catalysed reaction is adenosine(37) in tRNA1(Val) + S-adenosyl-L-methionine = N(6)-methyladenosine(37) in tRNA1(Val) + S-adenosyl-L-homocysteine + H(+). Functionally, specifically methylates the adenine in position 37 of tRNA(1)(Val) (anticodon cmo5UAC). This Edwardsiella ictaluri (strain 93-146) protein is tRNA1(Val) (adenine(37)-N6)-methyltransferase.